The chain runs to 186 residues: TATA box-binding protein-like 1 (186 aa).

This sequence belongs to the TBP family. In terms of assembly, binds TFIIA and TFIIB.

The protein localises to the cytoplasm. It is found in the nucleus. In terms of biological role, part of a specialized transcription system that mediates the transcription of most ribosomal proteins through the 5'-TCT-3' motif which is a core promoter element at these genes. Seems to also mediate the transcription of NF1. Does not bind the TATA box. This Bos taurus (Bovine) protein is TATA box-binding protein-like 1 (TBPL1).